Consider the following 549-residue polypeptide: Glutamyl-tRNA(Gln) amidotransferase subunit B, mitochondrial (549 aa).

A mitochondrion-targeting transit peptide spans 1 to 23; it reads MLRISRDTKIVARVTHVTKSRTY.

The protein belongs to the GatB/GatE family. GatB subfamily. As to quaternary structure, subunit of the heterotrimeric GatFAB amidotransferase (AdT) complex, composed of A, B and F subunits.

The protein localises to the mitochondrion. The catalysed reaction is L-glutamyl-tRNA(Gln) + L-glutamine + ATP + H2O = L-glutaminyl-tRNA(Gln) + L-glutamate + ADP + phosphate + H(+). Functionally, allows the formation of correctly charged Gln-tRNA(Gln) through the transamidation of misacylated Glu-tRNA(Gln) in the mitochondria. The reaction takes place in the presence of glutamine and ATP through an activated gamma-phospho-Glu-tRNA(Gln). This is Glutamyl-tRNA(Gln) amidotransferase subunit B, mitochondrial from Yarrowia lipolytica (strain CLIB 122 / E 150) (Yeast).